A 326-amino-acid chain; its full sequence is Tagatose 1,6-diphosphate aldolase (326 aa).

It belongs to the aldolase LacD family.

It catalyses the reaction D-tagatofuranose 1,6-bisphosphate = D-glyceraldehyde 3-phosphate + dihydroxyacetone phosphate. The protein operates within carbohydrate metabolism; D-tagatose 6-phosphate degradation; D-glyceraldehyde 3-phosphate and glycerone phosphate from D-tagatose 6-phosphate: step 2/2. The polypeptide is Tagatose 1,6-diphosphate aldolase (Staphylococcus aureus (strain bovine RF122 / ET3-1)).